The chain runs to 428 residues: Glutamate-1-semialdehyde 2,1-aminomutase 1 (428 aa).

An N6-(pyridoxal phosphate)lysine modification is found at Lys-268.

This sequence belongs to the class-III pyridoxal-phosphate-dependent aminotransferase family. HemL subfamily. In terms of assembly, homodimer. Pyridoxal 5'-phosphate is required as a cofactor.

It is found in the cytoplasm. It carries out the reaction (S)-4-amino-5-oxopentanoate = 5-aminolevulinate. Its pathway is porphyrin-containing compound metabolism; protoporphyrin-IX biosynthesis; 5-aminolevulinate from L-glutamyl-tRNA(Glu): step 2/2. This chain is Glutamate-1-semialdehyde 2,1-aminomutase 1, found in Geobacillus thermodenitrificans (strain NG80-2).